The sequence spans 303 residues: Probable cell division protein WhiA (303 aa).

A DNA-binding region (H-T-H motif) is located at residues 272–303 (SIQQLADSLSTPLTKSGVNHRLRKINKIADEL).

The protein belongs to the WhiA family.

In terms of biological role, involved in cell division and chromosome segregation. This Streptococcus pneumoniae serotype 4 (strain ATCC BAA-334 / TIGR4) protein is Probable cell division protein WhiA.